The sequence spans 296 residues: Chondrolectin (296 aa).

The N-terminal stretch at 1–20 (MRATLRILCALTFLVSCSRG) is a signal peptide. Over 21–238 (ARVVSGQTVC…RLIIAGPSSM (218 aa)) the chain is Extracellular. One can recognise a C-type lectin domain in the interval 38–187 (CYKIAYFKDV…CNMKHNFICK (150 aa)). Positions 197-221 (VQSDRPGGHDVDLSTEDKEDRRTPP) are enriched in basic and acidic residues. Residues 197 to 229 (VQSDRPGGHDVDLSTEDKEDRRTPPTDEDESPR) form a disordered region. A helical transmembrane segment spans residues 239 to 266 (LLIYVIIPTIPLLLLILVASGTCCFQML). The Cytoplasmic segment spans residues 267–296 (SKSKPRTKTSVNQSTLWISKTPKIDSGMEV).

In terms of tissue distribution, expressed in developing motor neurons.

The protein resides in the membrane. Plays a role in the development of the nervous system such as in neurite outgrowth and elongation. Involved in motor axon growth and guidance. Required for correct interactions of motor axons with the horizontal myoseptum. The chain is Chondrolectin (chodl) from Danio rerio (Zebrafish).